The following is a 584-amino-acid chain: DNA ligase (584 aa).

E249 serves as a coordination point for ATP. K251 (N6-AMP-lysine intermediate) is an active-site residue. ATP contacts are provided by R256, R271, E301, F341, R416, and K422.

The protein belongs to the ATP-dependent DNA ligase family. Requires Mg(2+) as cofactor.

The enzyme catalyses ATP + (deoxyribonucleotide)n-3'-hydroxyl + 5'-phospho-(deoxyribonucleotide)m = (deoxyribonucleotide)n+m + AMP + diphosphate.. Its function is as follows. DNA ligase that seals nicks in double-stranded DNA during DNA replication, DNA recombination and DNA repair. This chain is DNA ligase, found in Pyrobaculum arsenaticum (strain DSM 13514 / JCM 11321 / PZ6).